The following is a 163-amino-acid chain: Putative phosphinothricin acetyltransferase YwnH (163 aa).

Positions 1-158 constitute an N-acetyltransferase domain; the sequence is MTLRLAEHRD…DGKRYDLKIL (158 aa). Residues 85–87, 94–98, and 124–126 contribute to the acetyl-CoA site; these read IYI, KGVGS, and NKP.

The protein belongs to the acetyltransferase family. PAT/BAR subfamily.

The catalysed reaction is phosphinothricin + acetyl-CoA = N-acetylphosphinothricin + CoA + H(+). Its function is as follows. This enzyme is an effector of phosphinothricin tripeptide (PTT or bialaphos) resistance. Inactivates PTT by transfer of an acetyl group. The chain is Putative phosphinothricin acetyltransferase YwnH (ywnH) from Bacillus subtilis (strain 168).